A 547-amino-acid polypeptide reads, in one-letter code: Natural resistance-associated macrophage protein 1 (547 aa).

Positions Met-1–Pro-30 are disordered. The Cytoplasmic portion of the chain corresponds to Met-1–Lys-54. Over residues Gln-8–Ser-17 the composition is skewed to polar residues. Residues Pro-21 to Pro-30 are compositionally biased toward low complexity. The chain crosses the membrane as a helical span at residues Leu-55–Ile-75. Topologically, residues Glu-76–Ala-81 are extracellular. Residues Gly-82–Leu-102 form a helical membrane-spanning segment. Topologically, residues Cys-103–Glu-139 are cytoplasmic. Residues Leu-140 to Leu-160 traverse the membrane as a helical segment. Over Ser-161–Arg-164 the chain is Extracellular. The chain crosses the membrane as a helical span at residues Ile-165–Asp-185. Over Asn-186–Glu-193 the chain is Cytoplasmic. Residues Ala-194 to Ala-214 form a helical membrane-spanning segment. The Extracellular segment spans residues Arg-215–Gln-240. Residues Ala-241 to Val-261 form a helical membrane-spanning segment. Residues Lys-262–Ser-286 lie on the Cytoplasmic side of the membrane. The helical transmembrane segment at Ile-287–Phe-307 threads the bilayer. Topologically, residues Tyr-308 to Gly-346 are extracellular. 2 N-linked (GlcNAc...) asparagine glycosylation sites follow: Asn-321 and Asn-335. A helical membrane pass occupies residues Val-347 to Ala-367. At Ala-368–Arg-394 the chain is on the cytoplasmic side. A helical membrane pass occupies residues Phe-395–Phe-415. Topologically, residues Arg-416–Gln-432 are extracellular. A helical transmembrane segment spans residues Ser-433–Met-453. The Cytoplasmic portion of the chain corresponds to Gln-454–Ala-464. A helical membrane pass occupies residues Ile-465–Leu-485. Over Pro-486–Ala-492 the chain is Extracellular. A helical transmembrane segment spans residues Tyr-493–Trp-513. At Thr-514–Gly-547 the chain is on the cytoplasmic side.

It belongs to the NRAMP family.

The protein localises to the late endosome membrane. It is found in the lysosome membrane. The catalysed reaction is Zn(2+)(in) + H(+)(out) = Zn(2+)(out) + H(+)(in). It catalyses the reaction Fe(2+)(in) + H(+)(out) = Fe(2+)(out) + H(+)(in). The enzyme catalyses Mn(2+)(in) + H(+)(out) = Mn(2+)(out) + H(+)(in). In terms of biological role, macrophage-specific antiporter that fluxes metal ions in either direction against a proton gradient. Localized to late endosomal lysosomal membranes, delivers bivalent cations from the cytosol into these acidic compartments where they may directly affect antimicrobial activity. Involved in iron metabolism and host natural resistance to infection with intracellular parasites. Pathogen resistance involves sequestration of Fe(2+) and Mn(2+), cofactors of both prokaryotic and eukaryotic catalases and superoxide dismutases, not only to protect the macrophage against its own generation of reactive oxygen species, but to deny the cations to the pathogen for synthesis of its protective enzymes. The protein is Natural resistance-associated macrophage protein 1 (SLC11A1) of Canis lupus familiaris (Dog).